The following is a 544-amino-acid chain: Spore germination protein KA (544 aa).

Residues 1–36 (MPLFSKRKNNTDSKDKQNTDERNQEQQQEKERPVLI) are disordered. A compositionally biased stretch (basic and acidic residues) spans 9–33 (NNTDSKDKQNTDERNQEQQQEKERP). A run of 5 helical transmembrane segments spans residues 279–299 (FAII…FVQF), 321–341 (VLVF…TTFH), 392–412 (AVSI…GIVS), 416–436 (VIIV…AMAI), and 443–463 (FIFI…GIIM). Positions 504-523 (KRPESVSKEDKVRQGKDQRP) are enriched in basic and acidic residues. Positions 504 to 544 (KRPESVSKEDKVRQGKDQRPEPAASRGMVNKDLEEGDQNGT) are disordered.

This sequence belongs to the GerABKA family.

Its subcellular location is the cell membrane. Involved in the germination response to the combination of glucose, fructose, L-asparagine, and KCl. In Bacillus subtilis (strain 168), this protein is Spore germination protein KA (gerKA).